A 1326-amino-acid polypeptide reads, in one-letter code: Putative late blight resistance protein homolog R1B-19 (1326 aa).

Coiled-coil stretches lie at residues 421–444 (RYSD…ESLQ) and 536–558 (PRMK…KLLN). ATP is bound at residue 570–577 (GMPGLGKT). Positions 611-864 (LLSLLCDTIG…KVKTCRLHDV (254 aa)) constitute an NB-ARC domain. A coiled-coil region spans residues 749-770 (SEMEKEVECWEQVANNLGTRIH). 9 LRR repeats span residues 953–978 (FKFL…VYLK), 980–996 (FSAH…IYNL), 1027–1050 (LRHL…SAKL), 1053–1070 (LETL…LNFP), 1071–1094 (IRLE…ISAP), 1098–1118 (YLKL…ADHL), 1119–1146 (KNLE…MFPQ), 1167–1191 (FPNL…AMNI), and 1208–1230 (LIEK…AFKR). One can recognise an HMA domain in the interval 1209-1278 (IEKKTLKLNL…AWHARVVVPT (70 aa)).

The protein belongs to the disease resistance NB-LRR family.

The protein localises to the cytoplasm. It is found in the membrane. In terms of biological role, confers resistance to late blight (Phytophthora infestans) races carrying the avirulence gene Avr1. Resistance proteins guard the plant against pathogens that contain an appropriate avirulence protein via an indirect interaction with this avirulence protein. That triggers a defense system including the hypersensitive response, which restricts the pathogen growth. This Solanum demissum (Wild potato) protein is Putative late blight resistance protein homolog R1B-19 (R1B-19).